Here is a 296-residue protein sequence, read N- to C-terminus: Maltose/maltodextrin transport system permease protein MalG (296 aa).

Topologically, residues 1 to 12 are cytoplasmic; it reads MAMVQPKSQKAR. A helical membrane pass occupies residues 13–35; the sequence is LFITHLLLLLFIAAIMFPLLMVV. The Periplasmic segment spans residues 36-88; sequence AISLRQGNFATGSLIPEQISWDHWKLALGFSVEQADGRITPPPFPVLLWLWNS. In terms of domain architecture, ABC transmembrane type-1 spans 85-281; the sequence is LWNSVKVAGI…LPITIVFLLA (197 aa). Residues 89 to 111 traverse the membrane as a helical segment; it reads VKVAGISAIGIVALSTTCAYAFA. Over 112-123 the chain is Cytoplasmic; sequence RMRFPGKATLLK. The chain crosses the membrane as a helical span at residues 124 to 143; it reads GMLIFQMFPAVLSLVALYAL. The Periplasmic portion of the chain corresponds to 144-152; the sequence is FDRLGEYIP. The helical transmembrane segment at 153–175 threads the bilayer; the sequence is FIGLNTHGGVIFAYLGGIALHVW. Topologically, residues 176-204 are cytoplasmic; the sequence is TIKGYFETIDSSLEEAAALDGATPWQAFR. Residues 205 to 227 traverse the membrane as a helical segment; the sequence is LVLLPLSVPILAVVFILSFIAAI. At 228-257 the chain is on the periplasmic side; it reads TEVPVASLLLRDVNSYTLAVGMQQYLNPQN. The chain crosses the membrane as a helical span at residues 258–280; the sequence is YLWGDFAAAAVMSALPITIVFLL. Residues 281–296 are Cytoplasmic-facing; sequence AQRWLVNGLTAGGVKG.

Belongs to the binding-protein-dependent transport system permease family. MalFG subfamily. As to quaternary structure, the complex is composed of two ATP-binding proteins (MalK), two transmembrane proteins (MalG and MalF) and a solute-binding protein (MalE).

Its subcellular location is the cell inner membrane. Its function is as follows. Part of the ABC transporter complex MalEFGK involved in maltose/maltodextrin import. Probably responsible for the translocation of the substrate across the membrane. The polypeptide is Maltose/maltodextrin transport system permease protein MalG (malG) (Escherichia coli O157:H7).